The following is a 101-amino-acid chain: uncharacterized protein (101 aa).

The first 27 residues, 1 to 27 (MQLTGSIYPWFTAYALLKSTLMELINS), serve as a signal peptide directing secretion. 2 helical membrane passes run 42–64 (LVPY…AISF) and 79–98 (TFVF…NTFL).

Its subcellular location is the cytoplasm. The protein resides in the nucleus membrane. This is an uncharacterized protein from Schizosaccharomyces pombe (strain 972 / ATCC 24843) (Fission yeast).